A 255-amino-acid polypeptide reads, in one-letter code: Tabinhibitin 1 (255 aa).

An N-terminal signal peptide occupies residues Met1–Ala23. An SCP domain is found at Leu67–Phe211.

Belongs to the CRISP family. In terms of tissue distribution, expressed in salivary glands.

The protein localises to the secreted. In terms of biological role, inhibits platelet aggregation induced by all agonists tested. May act by competing with fibrinogen for binding to glycoprotein IIb/IIIa (ITGA2B/ITGB3). The polypeptide is Tabinhibitin 1 (Tabanus yao (Horsefly)).